Consider the following 168-residue polypeptide: G/U mismatch-specific DNA glycosylase (168 aa).

The protein belongs to the uracil-DNA glycosylase (UDG) superfamily. TDG/mug family. As to quaternary structure, binds DNA as a monomer.

The protein localises to the cytoplasm. The enzyme catalyses Specifically hydrolyzes mismatched double-stranded DNA and polynucleotides, releasing free uracil.. Excises ethenocytosine and uracil, which can arise by alkylation or deamination of cytosine, respectively, from the corresponding mispairs with guanine in ds-DNA. It is capable of hydrolyzing the carbon-nitrogen bond between the sugar-phosphate backbone of the DNA and the mispaired base. The complementary strand guanine functions in substrate recognition. Required for DNA damage lesion repair in stationary-phase cells. The chain is G/U mismatch-specific DNA glycosylase from Escherichia coli (strain UTI89 / UPEC).